A 520-amino-acid chain; its full sequence is Genome polyprotein (520 aa).

Ser-2 is subject to N-acetylserine; by host. Residues 2–23 (STNPKPQRKTKRNTNRRPQDVK) form an interaction with STAT1 region. The tract at residues 2-58 (STNPKPQRKTKRNTNRRPQDVKFPGGGQIVGGVYLLTRRGPRLGVRATRKTSERSQP) is interaction with EIF2AK2/PKR. Residues 2–59 (STNPKPQRKTKRNTNRRPQDVKFPGGGQIVGGVYLLTRRGPRLGVRATRKTSERSQPR) form an interaction with DDX3X region. Residues 2-75 (STNPKPQRKT…PKARRPEGRA (74 aa)) are disordered. Residues 2–168 (STNPKPQRKT…EDGVNYATGN (167 aa)) are Cytoplasmic-facing. 2 short sequence motifs (nuclear localization signal) span residues 5–13 (PKPQRKTKR) and 38–43 (TRRGPR). Over residues 7 to 16 (PQRKTKRNTN) the composition is skewed to basic residues. At Ser-53 the chain carries Phosphoserine; by host. 2 short sequence motifs (nuclear localization signal) span residues 58-64 (PRGRRQP) and 66-71 (PKARRP). Residues 58–68 (PRGRRQPIPKA) are compositionally biased toward basic residues. Position 99 is a phosphoserine; by host (Ser-99). The segment at 112-152 (PRRRSRNLGKVIDTLTCGFADLMGYIPLVGAPLGGASRALA) is important for endoplasmic reticulum and mitochondrial localization. Phosphoserine; by host PKA is present on Ser-116. The segment at 122-173 (VIDTLTCGFADLMGYIPLVGAPLGGASRALAHGVRVLEDGVNYATGNLPGCS) is interaction with APOA2. The segment at 164–167 (YATG) is important for lipid droplets localization. The helical transmembrane segment at 169–189 (LPGCSFSIFLSALMSCLTTPA) threads the bilayer. The propeptide at 178–191 (LSALMSCLTTPASA) is ER anchor for the core protein, removed in mature form by host signal peptidase. The Lumenal segment spans residues 190-358 (SAYEVRNVSG…AGAHWGVLAG (169 aa)). N-linked (GlcNAc...) asparagine; by host glycosylation is found at Asn-196, Asn-209, Asn-234, and Asn-250. The important for fusion stretch occupies residues 265–296 (LVGAATLCSAMYVGDLCGSVFLVSQLFTFSPR). Asn-305 is a glycosylation site (N-linked (GlcNAc...) asparagine; by host). A helical transmembrane segment spans residues 359-379 (LAYYSMVGNWAKVLIVMLLFA). At 380-520 (GVDGANTHTV…TPSPVVVGTT (141 aa)) the chain is on the lumenal side. The interval 385–411 (NTHTVGGTEGFATQRLTSLFALGPSQK) is HVR1. N-linked (GlcNAc...) asparagine; by host glycosylation occurs at Asn-418. Asn-424, Asn-431, and Asn-449 each carry an N-linked (GlcNAc...) (high mannose) asparagine; by host glycan. Cys-453 and Cys-460 are joined by a disulfide. The tract at residues 474–479 (TYAEPS) is HVR2. The CD81-binding 1 stretch occupies residues 480 to 493 (ISEQRPYCWHYAPR). 2 disulfides stabilise this stretch: Cys-487-Cys-495 and Cys-504-Cys-509.

It belongs to the hepacivirus polyprotein family. In terms of assembly, homooligomer. Interacts with E1 (via C-terminus). Interacts with the non-structural protein 5A. Interacts (via N-terminus) with host STAT1 (via SH2 domain); this interaction results in decreased STAT1 phosphorylation and ubiquitin-mediated proteasome-dependent STAT1 degradation, leading to decreased IFN-stimulated gene transcription. Interacts with host STAT3; this interaction constitutively activates STAT3. Interacts with host LTBR receptor. Interacts with host TNFRSF1A receptor and possibly induces apoptosis. Interacts with host HNRPK. Interacts with host YWHAE. Interacts with host UBE3A/E6AP. Interacts with host DDX3X. Interacts with host APOA2. Interacts with host RXRA protein. Interacts with host SP110 isoform 3/Sp110b; this interaction sequesters the transcriptional corepressor SP110 away from the nucleus. Interacts with host CREB3 nuclear transcription protein; this interaction triggers cell transformation. Interacts with host ACY3. Interacts with host C1QR1. Interacts with host RBM24; this interaction, which enhances the interaction of the mature core protein with 5'-UTR, may inhibit viral translation and favor replication. Interacts with host EIF2AK2/PKR; this interaction induces the autophosphorylation of EIF2AK2. Part of the viral assembly initiation complex composed of NS2, E1, E2, NS3, NS4A, NS5A and the mature core protein. Forms a heterodimer with envelope glycoprotein E2. Interacts with mature core protein. Interacts with protease NS2. The heterodimer E1/E2 interacts with host CLDN1; this interaction plays a role in viral entry into host cell. Interacts with host SPSB2 (via C-terminus). Part of the viral assembly initiation complex composed of NS2, E1, E2, NS3, NS4A, NS5A and the mature core protein. As to quaternary structure, forms a heterodimer with envelope glycoprotein E1. Interacts with host CD81 and SCARB1 receptors; these interactions play a role in viral entry into host cell. Interacts with host EIF2AK2/PKR; this interaction inhibits EIF2AK2 and probably allows the virus to evade the innate immune response. Interacts with host CD209/DC-SIGN and CLEC4M/DC-SIGNR. Interact with host SPCS1; this interaction is essential for viral particle assembly. Interacts with protease NS2. The heterodimer E1/E2 interacts with host CLDN1; this interaction plays a role in viral entry into host cell. Part of the viral assembly initiation complex composed of NS2, E1, E2, NS3, NS4A, NS5A and the mature core protein. In terms of processing, specific enzymatic cleavages in vivo yield mature proteins. The structural proteins, core, E1, E2 and p7 are produced by proteolytic processing by host signal peptidases. The core protein precursor is synthesized as a 23 kDa, which is retained in the ER membrane through the hydrophobic signal peptide. Cleavage by the signal peptidase releases the 21 kDa mature core protein. The cleavage of the core protein precursor occurs between aminoacids 176 and 188 but the exact cleavage site is not known. Some degraded forms of the core protein appear as well during the course of infection. The other proteins (p7, NS2, NS3, NS4A, NS4B, NS5A and NS5B) are cleaved by the viral proteases. Autoprocessing between NS2 and NS3 is mediated by the NS2 cysteine protease catalytic domain and regulated by the NS3 N-terminal domain. Phosphorylated by host PKC and PKA. Post-translationally, ubiquitinated; mediated by UBE3A and leading to core protein subsequent proteasomal degradation. In terms of processing, highly N-glycosylated.

It is found in the host endoplasmic reticulum membrane. The protein resides in the host mitochondrion membrane. Its subcellular location is the virion. It localises to the host cytoplasm. The protein localises to the host nucleus. It is found in the host lipid droplet. The protein resides in the virion membrane. In terms of biological role, packages viral RNA to form a viral nucleocapsid, and promotes virion budding. Participates in the viral particle production as a result of its interaction with the non-structural protein 5A. Binds RNA and may function as a RNA chaperone to induce the RNA structural rearrangements taking place during virus replication. Modulates viral translation initiation by interacting with viral IRES and 40S ribosomal subunit. Affects various cell signaling pathways, host immunity and lipid metabolism. Prevents the establishment of cellular antiviral state by blocking the interferon-alpha/beta (IFN-alpha/beta) and IFN-gamma signaling pathways and by blocking the formation of phosphorylated STAT1 and promoting ubiquitin-mediated proteasome-dependent degradation of STAT1. Activates STAT3 leading to cellular transformation. Regulates the activity of cellular genes, including c-myc and c-fos. May repress the promoter of p53, and sequester CREB3 and SP110 isoform 3/Sp110b in the cytoplasm. Represses cell cycle negative regulating factor CDKN1A, thereby interrupting an important check point of normal cell cycle regulation. Targets transcription factors involved in the regulation of inflammatory responses and in the immune response: suppresses TNF-induced NF-kappa-B activation, and activates AP-1. Binds to dendritic cells (DCs) via C1QR1, resulting in down-regulation of T-lymphocytes proliferation. Alters lipid metabolism by interacting with hepatocellular proteins involved in lipid accumulation and storage. Induces up-regulation of FAS promoter activity, and thereby contributes to the increased triglyceride accumulation in hepatocytes (steatosis). Its function is as follows. Forms a heterodimer with envelope glycoprotein E2, which mediates virus attachment to the host cell, virion internalization through clathrin-dependent endocytosis and fusion with host membrane. Fusion with the host cell is most likely mediated by both E1 and E2, through conformational rearrangements of the heterodimer required for fusion rather than a classical class II fusion mechanism. E1/E2 heterodimer binds host apolipoproteins such as APOB and ApoE thereby forming a lipo-viro-particle (LVP). APOE associated to the LVP allows the initial virus attachment to cell surface receptors such as the heparan sulfate proteoglycans (HSPGs), syndecan-1 (SDC1), syndecan-1 (SDC2), the low-density lipoprotein receptor (LDLR) and scavenger receptor class B type I (SCARB1). The cholesterol transfer activity of SCARB1 allows E2 exposure and binding of E2 to SCARB1 and the tetraspanin CD81. E1/E2 heterodimer binding on CD81 activates the epithelial growth factor receptor (EGFR) signaling pathway. Diffusion of the complex E1-E2-EGFR-SCARB1-CD81 to the cell lateral membrane allows further interaction with Claudin 1 (CLDN1) and occludin (OCLN) to finally trigger HCV entry. Forms a heterodimer with envelope glycoprotein E1, which mediates virus attachment to the host cell, virion internalization through clathrin-dependent endocytosis and fusion with host membrane. Fusion with the host cell is most likely mediated by both E1 and E2, through conformational rearrangements of the heterodimer required for fusion rather than a classical class II fusion mechanism. The interaction between envelope glycoprotein E2 and host apolipoprotein E/APOE allows the proper assembly, maturation and infectivity of the viral particles. This interaction is probably promoted via the up-regulation of cellular autophagy by the virus. E1/E2 heterodimer binds host apolipoproteins such as APOB and APOE thereby forming a lipo-viro-particle (LVP). APOE associated to the LVP allows the initial virus attachment to cell surface receptors such as the heparan sulfate proteoglycans (HSPGs), syndecan-1 (SDC1), syndecan-1 (SDC2), the low-density lipoprotein receptor (LDLR) and scavenger receptor class B type I (SCARB1). The cholesterol transfer activity of SCARB1 allows E2 exposure and binding of E2 to SCARB1 and the tetraspanin CD81. E1/E2 heterodimer binding on CD81 activates the epithelial growth factor receptor (EGFR) signaling pathway. Diffusion of the complex E1-E2-EGFR-SCARB1-CD81 to the cell lateral membrane allows further interaction with Claudin 1 (CLDN1) and occludin (OCLN) to finally trigger HCV entry. Inhibits host EIF2AK2/PKR activation, preventing the establishment of an antiviral state. Viral ligand for CD209/DC-SIGN and CLEC4M/DC-SIGNR, which are respectively found on dendritic cells (DCs), and on liver sinusoidal endothelial cells and macrophage-like cells of lymph node sinuses. These interactions allow the capture of circulating HCV particles by these cells and subsequent facilitated transmission to permissive cells such as hepatocytes and lymphocyte subpopulations. This chain is Genome polyprotein, found in Hepatitis C virus (isolate HCV-KF) (HCV).